Consider the following 953-residue polypeptide: Trafficking kinesin-binding protein 1 (953 aa).

The HAP1 N-terminal domain occupies 47–354; the sequence is LEEQLPHYKL…EELKNLRNKT (308 aa). Residues 104-356 adopt a coiled-coil conformation; the sequence is QMTKTYNDID…LKNLRNKTMP (253 aa). The interval 359-509 is interaction with HGS; that stretch reads TSRRYHSLGL…RRLSLRRENY (151 aa). A glycan (O-linked (GlcNAc) serine) is linked at Ser447. Positions 472–495 are disordered; sequence AADLGNDERSKKPGTPGTPGSHDL. Residues 492–532 are a coiled coil; the sequence is SHDLETALRRLSLRRENYLSERRFFEEEQERKLQELAEKGE. Ser537 carries the phosphoserine modification. The tract at residues 658 to 672 is interaction with OGT; sequence PGKCMSQTNSTFTFT. 2 O-linked (GlcNAc) serine glycosylation sites follow: Ser680 and Ser719. Ser719 carries the phosphoserine modification. The interval 777 to 796 is disordered; the sequence is VIPSTPPNSPMQTPTSSPPS. Residues 786–796 are compositionally biased toward low complexity; sequence PMQTPTSSPPS. A Phosphoserine modification is found at Ser919. O-linked (GlcNAc) threonine glycosylation occurs at Thr935.

It belongs to the milton family. As to quaternary structure, interacts with RHOT1 and RHOT2. Found in a complex with KIF5B, OGT, RHOT1 and RHOT2. Interacts with HGS. Interacts with GABRA1. Interacts with KIF5C. Interacts with OGT; stable interaction is not required for glycosylation of this protein by OGT. Isoform 1 interacts with OGT. O-glycosylated. Glycosylated by OGT; glycosylation in response to increased extracellular glucose levels is required for and leads to regulation of mitochondrial motility by OGT. High expression in spinal cord and moderate expression in all other tissues and specific brain regions examined. Expressed in all cell lines examined.

The protein resides in the cytoplasm. The protein localises to the nucleus. It localises to the mitochondrion. Its subcellular location is the early endosome. It is found in the endosome. The protein resides in the mitochondrion membrane. The protein localises to the cell cortex. Functionally, involved in the regulation of endosome-to-lysosome trafficking, including endocytic trafficking of EGF-EGFR complexes and GABA-A receptors. Involved in mitochondrial motility. When O-glycosylated, abolishes mitochondrial motility. Crucial for recruiting OGT to the mitochondrial surface of neuronal processes. TRAK1 and RHOT form an essential protein complex that links KIF5 to mitochondria for light chain-independent, anterograde transport of mitochondria. This chain is Trafficking kinesin-binding protein 1 (TRAK1), found in Homo sapiens (Human).